We begin with the raw amino-acid sequence, 414 residues long: 3-oxoacyl-[acyl-carrier-protein] synthase 2 (414 aa).

Residues 3-413 enclose the Ketosynthase family 3 (KS3) domain; that stretch reads KRRVVVTGMG…GTNGSLIFKR (411 aa). Catalysis depends on for beta-ketoacyl synthase activity residues Cys-164, His-304, and His-342.

This sequence belongs to the thiolase-like superfamily. Beta-ketoacyl-ACP synthases family. In terms of assembly, homodimer.

It catalyses the reaction a fatty acyl-[ACP] + malonyl-[ACP] + H(+) = a 3-oxoacyl-[ACP] + holo-[ACP] + CO2. The catalysed reaction is (9Z)-hexadecenoyl-[ACP] + malonyl-[ACP] + H(+) = 3-oxo-(11Z)-octadecenoyl-[ACP] + holo-[ACP] + CO2. It participates in lipid metabolism; fatty acid biosynthesis. Functionally, involved in the type II fatty acid elongation cycle. Catalyzes the elongation of a wide range of acyl-ACP by the addition of two carbons from malonyl-ACP to an acyl acceptor. Can efficiently catalyze the conversion of palmitoleoyl-ACP (cis-hexadec-9-enoyl-ACP) to cis-vaccenoyl-ACP (cis-octadec-11-enoyl-ACP), an essential step in the thermal regulation of fatty acid composition. The protein is 3-oxoacyl-[acyl-carrier-protein] synthase 2 (fabF) of Vibrio cholerae serotype O1 (strain ATCC 39315 / El Tor Inaba N16961).